The primary structure comprises 349 residues: Guanine nucleotide-binding protein alpha-13 subunit (349 aa).

G2 is lipidated: N-myristoyl glycine. C3 carries S-palmitoyl cysteine lipidation. The G-alpha domain maps to 35–349; the sequence is SHIRLLLLGS…VFKDIMKRKR (315 aa). Residues 38–51 are G1 motif; that stretch reads RLLLLGSAESGKTT. Residues 43 to 50, 177 to 183, 202 to 206, 271 to 274, and A327 contribute to the GTP site; these read GSAESGKT, IMAYVPT, DIGGQ, and NEID. The G2 motif stretch occupies residues 175–183; the sequence is DLIMAYVPT. T183 is a Mg(2+) binding site. The segment at 198–207 is G3 motif; sequence FQLFDIGGQK. Positions 267 to 274 are G4 motif; that stretch reads YLFLNEID. Residues 325-330 form a G5 motif region; it reads CIAIDT.

This sequence belongs to the G-alpha family. As to quaternary structure, g proteins are composed of 3 units; alpha, beta and gamma. The alpha chain contains the guanine nucleotide binding site.

Functionally, guanine nucleotide-binding proteins (G proteins) are involved as modulators or transducers in various transmembrane signaling systems. In Caenorhabditis briggsae, this protein is Guanine nucleotide-binding protein alpha-13 subunit.